The sequence spans 479 residues: Cysteine protease effector 1 (479 aa).

This is Cysteine protease effector 1 from Escherichia coli O1:K1:H7 (strain ATCC 11775 / DSM 30083 / JCM 1649 / NBRC 102203 / NCTC 9001 / U5/41).